The chain runs to 85 residues: Probable oxaloacetate decarboxylase gamma chain (85 aa).

Residues Ala11–Val33 traverse the membrane as a helical segment.

This sequence belongs to the OadG family. As to quaternary structure, heterotrimer of an alpha, a beta and a gamma subunit. The cofactor is Na(+).

The protein resides in the cell membrane. The enzyme catalyses oxaloacetate + 2 Na(+)(in) + H(+) = pyruvate + 2 Na(+)(out) + CO2. Catalyzes the decarboxylation of oxaloacetate coupled to Na(+) translocation. The protein is Probable oxaloacetate decarboxylase gamma chain of Vibrio vulnificus (strain CMCP6).